Reading from the N-terminus, the 418-residue chain is Delta(14)-sterol reductase TM7SF2 (418 aa).

6 helical membrane-spanning segments follow: residues 13 to 35 (FGGP…HLLL), 62 to 81 (ALLL…LLPA), 102 to 124 (GFQA…LPLS), 129 to 148 (MLLP…SLLL), 255 to 277 (FGFM…QAQF), and 287 to 304 (WPLA…YYIF). Residues lysine 311, arginine 315, leucine 338, tryptophan 343, and 350–351 (NY) contribute to the NADP(+) site. The helical transmembrane segment at 355–377 (LIMALAWSLPCGVFHLLPYFYFL) threads the bilayer. Residues aspartate 390, 394–398 (CRQKY), and tyrosine 405 each bind NADP(+).

This sequence belongs to the ERG4/ERG24 family. In terms of tissue distribution, highly expressed in liver and brain.

The protein resides in the microsome membrane. Its subcellular location is the endoplasmic reticulum membrane. It carries out the reaction 4,4-dimethyl-5alpha-cholesta-8,24-dien-3beta-ol + NADP(+) = 4,4-dimethyl-5alpha-cholesta-8,14,24-trien-3beta-ol + NADPH + H(+). The enzyme catalyses 5alpha-cholest-8,14-dien-3beta-ol + NADPH + H(+) = 5alpha-cholest-8-en-3beta-ol + NADP(+). The catalysed reaction is 4,4-dimethyl-8,14-cholestadien-3beta-ol + NADPH + H(+) = 4,4-dimethyl-5alpha-cholest-8-en-3beta-ol + NADP(+). The protein operates within steroid biosynthesis; cholesterol biosynthesis. In terms of biological role, catalyzes the reduction of the C14-unsaturated bond of lanosterol, as part of the metabolic pathway leading to cholesterol biosynthesis. This is Delta(14)-sterol reductase TM7SF2 (TM7SF2) from Bos taurus (Bovine).